Reading from the N-terminus, the 310-residue chain is Ornithine carbamoyltransferase (310 aa).

Residues 56 to 59 (STRT), Q83, R107, and 134 to 137 (HPCQ) each bind carbamoyl phosphate. Residues N165, D229, and 233 to 234 (SM) contribute to the L-ornithine site. Carbamoyl phosphate contacts are provided by residues 269–270 (CL) and R297.

The protein belongs to the aspartate/ornithine carbamoyltransferase superfamily. OTCase family.

The protein localises to the cytoplasm. It carries out the reaction carbamoyl phosphate + L-ornithine = L-citrulline + phosphate + H(+). It participates in amino-acid biosynthesis; L-arginine biosynthesis; L-arginine from L-ornithine and carbamoyl phosphate: step 1/3. Functionally, reversibly catalyzes the transfer of the carbamoyl group from carbamoyl phosphate (CP) to the N(epsilon) atom of ornithine (ORN) to produce L-citrulline. This Symbiobacterium thermophilum (strain DSM 24528 / JCM 14929 / IAM 14863 / T) protein is Ornithine carbamoyltransferase.